Consider the following 391-residue polypeptide: Matrix metalloproteinase-23 (391 aa).

At 1 to 19 the chain is on the cytoplasmic side; it reads MGWRACLRPEASGAVQGRW. Residues 1-79 constitute a propeptide that is removed on maturation; it reads MGWRACLRPE…LSMLVTRRRR (79 aa). A helical; Signal-anchor for type II membrane protein membrane pass occupies residues 20 to 38; it reads LGAVLSGLCLLSALAFLEW. Topologically, residues 39-391 are lumenal; sequence LGSPTETAWN…TYSWRVRVRS (353 aa). N93 and N149 each carry an N-linked (GlcNAc...) asparagine glycan. H212 provides a ligand contact to Zn(2+). The active site involves E213. The Zn(2+) site is built by H216 and H222. The N-linked (GlcNAc...) asparagine glycan is linked to N233. The region spanning 256–290 is the ShKT domain; the sequence is CLDRIFVCTSWARKGFCDVRQRLMKRLCPRSCDFC. Intrachain disulfides connect C256–C290, C263–C283, and C272–C287. The 86-residue stretch at 296–381 folds into the Ig-like C2-type domain; it reads PTVATTTSPT…VVRHRQRVLT (86 aa). N317 carries an N-linked (GlcNAc...) asparagine glycan. A disulfide bond links C322 and C371.

Belongs to the peptidase M10A family. The cofactor is Zn(2+). Post-translationally, N-glycosylated. In terms of processing, proteolytic cleavage might yield an active form. In terms of tissue distribution, expressed at the highest levels in ovary and uterus. In ovary expression is strictly confined to granulosa cells of preantral and small antral follicles. Detected also in testis and prostate.

Its subcellular location is the membrane. It is found in the endoplasmic reticulum membrane. Inhibited by TIMP2. In terms of biological role, protease. May regulate the surface expression of some potassium channels by retaining them in the endoplasmic reticulum. This chain is Matrix metalloproteinase-23 (Mmp23), found in Rattus norvegicus (Rat).